A 201-amino-acid chain; its full sequence is Holliday junction branch migration complex subunit RuvA (201 aa).

Residues 1–64 form a domain I region; the sequence is MYEYIRGQFQ…EDFIGLYGFT (64 aa). The domain II stretch occupies residues 65 to 143; it reads TREELEMFKL…PDELTSEEGE (79 aa). Residues 144-152 form a flexible linker region; the sequence is LIEGINDNS. The tract at residues 153-201 is domain III; the sequence is DYSFNINETLSALMALGYTEKEAQKALEKVDKTLSIENMIKESLKLLMR.

The protein belongs to the RuvA family. In terms of assembly, homotetramer. Forms an RuvA(8)-RuvB(12)-Holliday junction (HJ) complex. HJ DNA is sandwiched between 2 RuvA tetramers; dsDNA enters through RuvA and exits via RuvB. An RuvB hexamer assembles on each DNA strand where it exits the tetramer. Each RuvB hexamer is contacted by two RuvA subunits (via domain III) on 2 adjacent RuvB subunits; this complex drives branch migration. In the full resolvosome a probable DNA-RuvA(4)-RuvB(12)-RuvC(2) complex forms which resolves the HJ.

It is found in the cytoplasm. In terms of biological role, the RuvA-RuvB-RuvC complex processes Holliday junction (HJ) DNA during genetic recombination and DNA repair, while the RuvA-RuvB complex plays an important role in the rescue of blocked DNA replication forks via replication fork reversal (RFR). RuvA specifically binds to HJ cruciform DNA, conferring on it an open structure. The RuvB hexamer acts as an ATP-dependent pump, pulling dsDNA into and through the RuvAB complex. HJ branch migration allows RuvC to scan DNA until it finds its consensus sequence, where it cleaves and resolves the cruciform DNA. This Clostridium perfringens (strain ATCC 13124 / DSM 756 / JCM 1290 / NCIMB 6125 / NCTC 8237 / Type A) protein is Holliday junction branch migration complex subunit RuvA.